The chain runs to 105 residues: uncharacterized protein (105 aa).

It localises to the mitochondrion. This is an uncharacterized protein from Paramecium tetraurelia.